The primary structure comprises 412 residues: Gamma-glutamyl phosphate reductase (412 aa).

Belongs to the gamma-glutamyl phosphate reductase family.

Its subcellular location is the cytoplasm. The enzyme catalyses L-glutamate 5-semialdehyde + phosphate + NADP(+) = L-glutamyl 5-phosphate + NADPH + H(+). It participates in amino-acid biosynthesis; L-proline biosynthesis; L-glutamate 5-semialdehyde from L-glutamate: step 2/2. Catalyzes the NADPH-dependent reduction of L-glutamate 5-phosphate into L-glutamate 5-semialdehyde and phosphate. The product spontaneously undergoes cyclization to form 1-pyrroline-5-carboxylate. The polypeptide is Gamma-glutamyl phosphate reductase (Actinobacillus pleuropneumoniae serotype 3 (strain JL03)).